Reading from the N-terminus, the 631-residue chain is DDB1- and CUL4-associated factor 8-like protein 2 (631 aa).

Disordered regions lie at residues 1–91 (MSHQ…EDFE) and 108–163 (EEET…HEQY). Positions 44 to 54 (SELSVTVTGDG) are enriched in polar residues. 2 stretches are compositionally biased toward acidic residues: residues 77-88 (SASEDIELESLE) and 108-147 (EEET…EEEE). WD repeat units follow at residues 226–265 (DHVG…PVLN), 269–310 (GHTN…YFNN), 316–356 (QHRG…PASK), 364–404 (DKKV…KKEN), 420–459 (DFPT…GAQY), 467–507 (RNNT…IIQF), and 511–550 (SREG…ATEL). The tract at residues 594 to 631 (QDWRSGEAEFPDEESDESSSTSETSEEEVQDRVQCMPS) is disordered.

This sequence belongs to the WD repeat DCAF8 family.

The chain is DDB1- and CUL4-associated factor 8-like protein 2 (DCAF8L2) from Homo sapiens (Human).